Here is a 274-residue protein sequence, read N- to C-terminus: 3',5'-cyclic adenosine monophosphate phosphodiesterase CpdA (274 aa).

D21, H23, D63, N93, H163, H202, and H204 together coordinate Fe cation. Residues H23, D63, and 93-94 (NH) contribute to the AMP site. H204 contacts AMP.

It belongs to the cyclic nucleotide phosphodiesterase class-III family. It depends on Fe(2+) as a cofactor.

The enzyme catalyses 3',5'-cyclic AMP + H2O = AMP + H(+). Hydrolyzes cAMP to 5'-AMP. Plays an important regulatory role in modulating the intracellular concentration of cAMP, thereby influencing cAMP-dependent processes. May coordinate responses to nutritional stress, ensuring optimal competence development. The polypeptide is 3',5'-cyclic adenosine monophosphate phosphodiesterase CpdA (Haemophilus influenzae (strain ATCC 51907 / DSM 11121 / KW20 / Rd)).